The primary structure comprises 195 residues: Large ribosomal subunit protein uL5 (195 aa).

This sequence belongs to the universal ribosomal protein uL5 family. As to quaternary structure, part of the 50S ribosomal subunit; part of the 5S rRNA/L5/L18/L25 subcomplex. Contacts the 5S rRNA and the P site tRNA. Forms a bridge to the 30S subunit in the 70S ribosome.

This is one of the proteins that bind and probably mediate the attachment of the 5S RNA into the large ribosomal subunit, where it forms part of the central protuberance. In the 70S ribosome it contacts protein S13 of the 30S subunit (bridge B1b), connecting the 2 subunits; this bridge is implicated in subunit movement. Contacts the P site tRNA; the 5S rRNA and some of its associated proteins might help stabilize positioning of ribosome-bound tRNAs. This Leifsonia xyli subsp. xyli (strain CTCB07) protein is Large ribosomal subunit protein uL5.